A 154-amino-acid chain; its full sequence is SsrA-binding protein (154 aa).

This sequence belongs to the SmpB family.

It is found in the cytoplasm. Functionally, required for rescue of stalled ribosomes mediated by trans-translation. Binds to transfer-messenger RNA (tmRNA), required for stable association of tmRNA with ribosomes. tmRNA and SmpB together mimic tRNA shape, replacing the anticodon stem-loop with SmpB. tmRNA is encoded by the ssrA gene; the 2 termini fold to resemble tRNA(Ala) and it encodes a 'tag peptide', a short internal open reading frame. During trans-translation Ala-aminoacylated tmRNA acts like a tRNA, entering the A-site of stalled ribosomes, displacing the stalled mRNA. The ribosome then switches to translate the ORF on the tmRNA; the nascent peptide is terminated with the 'tag peptide' encoded by the tmRNA and targeted for degradation. The ribosome is freed to recommence translation, which seems to be the essential function of trans-translation. The polypeptide is SsrA-binding protein (Enterococcus faecalis (strain ATCC 700802 / V583)).